The following is a 2311-amino-acid chain: Proto-oncogene tyrosine-protein kinase ROS (2311 aa).

Positions 1–24 (MRNACLLLNRLGAFYFIWISAAYC) are cleaved as a signal peptide. Residues 25–1873 (SFSKNCQDLC…LAKDTVTSPD (1849 aa)) lie on the Extracellular side of the membrane. 34 N-linked (GlcNAc...) asparagine glycosylation sites follow: Asn-49, Asn-65, Asn-77, Asn-123, Asn-132, Asn-265, Asn-287, Asn-307, Asn-333, Asn-377, Asn-405, Asn-480, Asn-607, Asn-628, Asn-706, Asn-714, Asn-911, Asn-940, Asn-962, Asn-971, Asn-1110, Asn-1154, Asn-1180, Asn-1233, Asn-1255, Asn-1282, Asn-1316, Asn-1470, Asn-1509, Asn-1588, Asn-1628, Asn-1682, Asn-1696, and Asn-1730. Fibronectin type-III domains follow at residues 110–202 (KPGA…ASGV) and 203–294 (PTTA…PESK). The Fibronectin type-III 3 domain occupies 571–671 (LPTLPRLVTV…EPFRGMTFEE (101 aa)). Fibronectin type-III domains lie at 952-1047 (VPES…APEG) and 1051-1158 (APAN…SSDI). Fibronectin type-III domains are found at residues 1459-1569 (DTEK…TLYG), 1570-1669 (VPEG…AKTF), 1671-1766 (TPLS…TTAG), and 1767-1868 (VPSK…AKDT). Residues 1754-1764 (STSSPTSFKTT) are compositionally biased toward low complexity. Positions 1754 to 1786 (STSSPTSFKTTAGVPSKPGTPKRAEDSKNSVQW) are disordered. The span at 1775-1786 (KRAEDSKNSVQW) shows a compositional bias: basic and acidic residues. N-linked (GlcNAc...) asparagine glycosylation is found at Asn-1792, Asn-1795, and Asn-1822. Residues 1874–1898 (ITAIVAVIGAVVLGLTIIILFGFVW) form a helical membrane-spanning segment. Residues 1899–2311 (HQRWKSRKPA…SISSAELTSV (413 aa)) are Cytoplasmic-facing. The 280-residue stretch at 1961 to 2240 (LNLHKLLGSG…KLQEIRHSPL (280 aa)) folds into the Protein kinase domain. ATP contacts are provided by residues 1967-1975 (LGSGAFGEV) and Lys-1996. The Proton acceptor role is filled by Asp-2095. Position 2131 is a phosphotyrosine; by autocatalysis (Tyr-2131).

It belongs to the protein kinase superfamily. Tyr protein kinase family. Insulin receptor subfamily. As to quaternary structure, interacts with VAV3; constitutive interaction mediating VAV3 phosphorylation. As to expression, highest expression in kidney. Also expressed in gonad, thymus, bursa, brain and kidney.

The protein resides in the cell membrane. The catalysed reaction is L-tyrosyl-[protein] + ATP = O-phospho-L-tyrosyl-[protein] + ADP + H(+). Functionally, orphan receptor tyrosine kinase (RTK) that may activate several downstream signaling pathways related to cell differentiation, proliferation, growth and survival including the PI3 kinase-mTOR signaling pathway. Mediates the phosphorylation of PTPN11, an activator of this pathway. May also phosphorylate and activate the transcription factor STAT3 to control anchorage-independent cell growth. Mediates the phosphorylation and the activation of VAV3, a guanine nucleotide exchange factor regulating cell morphology. May activate other downstream signaling proteins including AKT1, MAPK1, MAPK3, IRS1, and PLCG2. This is Proto-oncogene tyrosine-protein kinase ROS (ROS1) from Gallus gallus (Chicken).